Reading from the N-terminus, the 676-residue chain is MEDLNIKLNAHFAGKVVRKDLTKKIKEGANVPVYVLEYLLGMYCATDDEKSMNDGVQMVKKILSDNFVRPDEAEKVKSKVKELGKYTVIDKIGVKLNDKKDIYEAEFSNLGLNGVPISSHYVKEFDKLLAGGIWCIVKMEYYFDEESKGTSPFSIESVTPIQMPNMDLEEMFEQRRQFSKEEWIDVLIRSTGMEPTQLEDTVKWHLLERMVPLVENNYNLCELGPRGTGKSHIYKEISPNSILVSGGQTTVANLFYNMSTRKIGLVGMWDTVAFDEVAGITFKDKDGIQIMKDYMASGSFARGREEKNASASMVFVGNINQSVDVLLKTSHLFDPFPEAMAYDSAFFDRMHYYLPGWEIPKMRPEFFTNEYGFITDYLAEFLREMRKRSFSDAIDKYFRLGNNLNQRDVIAVRKTVSGLIKLLYPNGEYIKEDVEEVLRYALIGRRRVKEQLKKIGGMEFYDVNFSYIDNESMNEEFVSVPEQGGGTLIPEGMNKPGHIYTVARGKTGMIGTYKLETEVVSGNGKFEKTGLNSDRDAKESIDTAFRFFKANNKNISGTISTTTKDYLMHIQDIHGVGLTGELSLAAFIALCSGALNKPVQSQMVVLGSISISGTINKVEELANVLQVCFDSGAKKILLPMVSAVDIPTVPPELFAKFQIGFYQSAEDAVFKALGVE.

This sequence belongs to the BrxL family.

Functionally, BREX systems (bacteriophage exclusion) provide immunity against bacteriophage. Part of a type 1 BREX system. This system allows phage adsorption but prevents phage DNA replication, without degradation of the phage DNA. Methylation of bacterial DNA by PglX probably guides self/non-self discrimination. When the brxA-brxB-brxC-pglX and pglZ-brxL operons are transformed into a susceptible B.subtilis strain (BEST7003) they confer resistance to bacteriophages SPbeta, SP16, Zeta, phi3T and SP02 and partial protection to phages SP01 and SP82G (these include lytic and temperate phage). They do not protect against phages phi105, rho10 or rho14. Additionally confers a very slight reduction in efficiency of plasmid transformation. The sequence is that of Lon-like protease BrxL from Bacillus cereus (strain H3081.97).